Consider the following 368-residue polypeptide: Cell division protein FtsZ 1 (368 aa).

GTP contacts are provided by residues Gly-52–Asn-56, Gly-139–Gly-141, Glu-170, Arg-174, and Asp-217.

This sequence belongs to the FtsZ family. In terms of assembly, homodimer. Polymerizes to form a dynamic ring structure in a strictly GTP-dependent manner. Interacts directly with several other division proteins.

The protein localises to the cytoplasm. Essential cell division protein that forms a contractile ring structure (Z ring) at the future cell division site. The regulation of the ring assembly controls the timing and the location of cell division. One of the functions of the FtsZ ring is to recruit other cell division proteins to the septum to produce a new cell wall between the dividing cells. Binds GTP and shows GTPase activity. This is Cell division protein FtsZ 1 from Archaeoglobus fulgidus (strain ATCC 49558 / DSM 4304 / JCM 9628 / NBRC 100126 / VC-16).